The chain runs to 203 residues: tRNA (pseudouridine(54)-N(1))-methyltransferase (203 aa).

S-adenosyl-L-methionine is bound by residues L135 and G156.

This sequence belongs to the methyltransferase superfamily. TrmY family. Homodimer.

It localises to the cytoplasm. It catalyses the reaction pseudouridine(54) in tRNA + S-adenosyl-L-methionine = N(1)-methylpseudouridine(54) in tRNA + S-adenosyl-L-homocysteine + H(+). Its function is as follows. Specifically catalyzes the N1-methylation of pseudouridine at position 54 (Psi54) in tRNAs. The sequence is that of tRNA (pseudouridine(54)-N(1))-methyltransferase from Thermococcus onnurineus (strain NA1).